The sequence spans 397 residues: Tryptophan synthase beta chain (397 aa).

Residue lysine 86 is modified to N6-(pyridoxal phosphate)lysine.

Belongs to the TrpB family. As to quaternary structure, tetramer of two alpha and two beta chains. Pyridoxal 5'-phosphate serves as cofactor.

It carries out the reaction (1S,2R)-1-C-(indol-3-yl)glycerol 3-phosphate + L-serine = D-glyceraldehyde 3-phosphate + L-tryptophan + H2O. It functions in the pathway amino-acid biosynthesis; L-tryptophan biosynthesis; L-tryptophan from chorismate: step 5/5. Functionally, the beta subunit is responsible for the synthesis of L-tryptophan from indole and L-serine. The chain is Tryptophan synthase beta chain from Edwardsiella ictaluri (strain 93-146).